A 431-amino-acid chain; its full sequence is Chaperone SurA (431 aa).

Residues 1–20 (MKLTVVTFALLAFISFNTFA) form the signal peptide. 2 PpiC domains span residues 171 to 272 (QAEY…KIID) and 281 to 381 (VAEL…QLMD).

It localises to the periplasm. It catalyses the reaction [protein]-peptidylproline (omega=180) = [protein]-peptidylproline (omega=0). Chaperone involved in the correct folding and assembly of outer membrane proteins. Recognizes specific patterns of aromatic residues and the orientation of their side chains, which are found more frequently in integral outer membrane proteins. May act in both early periplasmic and late outer membrane-associated steps of protein maturation. This Pseudoalteromonas atlantica (strain T6c / ATCC BAA-1087) protein is Chaperone SurA.